Here is a 2549-residue protein sequence, read N- to C-terminus: Serine/threonine-protein kinase mTOR (2549 aa).

Met1 is subject to N-acetylmethionine. Residues Met1–Val651 form an interaction with NBN region. HEAT repeat units lie at residues Ser16 to Arg53, Met55 to Gly99, Asn100 to Gly137, Asp138 to Val179, Pro180 to Thr220, Gln222 to Ser276, Met277 to Ile313, Thr314 to Asp364, Leu365 to Asp409, Thr410 to Arg445, Ser446 to Gly494, Pro495 to Pro529, Gln530 to His563, Gln564 to Gly596, His597 to Leu636, Ile637 to Phe683, His686 to Ala724, Met727 to Arg766, Arg769 to Leu811, Arg814 to Tyr853, Pro857 to Ala893, Leu894 to Pro942, Leu943 to Gln988, Phe989 to Ile1027, Pro1029 to Lys1068, Leu1069 to Ala1105, Asn1106 to Glu1144, Ser1145 to Tyr1188, Gln1189 to Glu1225, Glu1226 to Arg1273, Arg1274 to Asn1311, and Pro1312 to Leu1345. At Ser567 the chain carries Phosphoserine. Thr1162 is modified (phosphothreonine). N6-acetyllysine is present on Lys1218. Ser1261 is modified (phosphoserine). TPR repeat units follow at residues Thr1346–Leu1382, Leu1383–Pro1408, Thr1409–Glu1442, Leu1443–Asp1473, Pro1474–Glu1507, Thr1508–His1541, Asp1542–Glu1574, Leu1575–Ile1614, Ile1615–Asp1649, Met1650–His1693, Pro1694–Ala1731, Ile1732–Trp1786, Tyr1787–Gly1846, Asn1898–Ile1930, Gln1931–Gln1970, and Ala1971–Leu2005. One can recognise an FAT domain in the interval Leu1382–Ser1982. Residues Lys1662, Lys1702, and Arg1749 each contribute to the 1D-myo-inositol hexakisphosphate site. The span at Ile1825–Pro1860 shows a compositional bias: low complexity. The segment at Ile1825–Lys1867 is disordered. The interval Val2012–Tyr2144 is sufficient for interaction with the FKBP1A/rapamycin complex. Residue Lys2066 forms a Glycyl lysine isopeptide (Lys-Gly) (interchain with G-Cter in ubiquitin) linkage. In terms of domain architecture, PI3K/PI4K catalytic spans Ile2156–Lys2469. The residue at position 2159 (Ser2159) is a Phosphoserine; by TBK1. The tract at residues Val2162 to Arg2168 is G-loop. Phosphothreonine is present on Thr2164. 2 residues coordinate ATP: Ser2165 and Gln2167. Thr2173 carries the post-translational modification Phosphothreonine; by PKB/AKT1. 8 residues coordinate ATP: Leu2185, Lys2187, Glu2190, Tyr2225, Gly2238, Trp2239, Val2240, and Thr2245. The segment at Lys2258–Gly2296 is interaction with MLST8. The catalytic loop stretch occupies residues Gly2335 to Asn2343. Residue Asn2343 coordinates Mg(2+). Residues Met2345 and Ile2356 each contribute to the ATP site. Residues His2355 to Thr2380 are activation loop. Asp2357 lines the Mg(2+) pocket. Thr2446 is subject to Phosphothreonine; by RPS6KB1. Position 2448 is a phosphoserine; by RPS6KB1 (Ser2448). Residues Ser2478 and Ser2481 each carry the phosphoserine modification. Residues Asp2517–Trp2549 form the FATC domain.

It belongs to the PI3/PI4-kinase family. Part of the mechanistic target of rapamycin complex 1 (mTORC1) which contains MTOR, MLST8 and RPTOR. The mTORC1 complex is a 1 Md obligate dimer of two stoichiometric heterotetramers with overall dimensions of 290 A x 210 A x 135 A. It has a rhomboid shape and a central cavity, the dimeric interfaces are formed by interlocking interactions between the two MTOR and the two RPTOR subunits. The MLST8 subunit forms distal foot-like protuberances, and contacts only one MTOR within the complex, while the small AKT1S1/PRAS40 localizes to the midsection of the central core, in close proximity to RPTOR. mTORC1 associates with AKT1S1/PRAS40, which inhibits its activity by blocking MTOR substrate-recruitment site. Component of the mechanistic target of rapamycin complex 2 (mTORC2), consisting in two heterotretramers composed of MTOR, MLST8, RICTOR and MAPKAP1/SIN1. Interacts with PLPP7 and PML. Interacts with PRR5 and RICTOR; the interaction is direct within the mTORC2 complex and interaction with RICTOR is enhanced by deubiquitination of RICTOR by USP9X. mTORC1 and mTORC2 associate with DEPTOR, which regulates their activity. Interacts with WAC; WAC positively regulates MTOR activity by promoting the assembly of the TTT complex composed of TELO2, TTI1 and TTI2 and the RUVBL complex composed of RUVBL1 and RUVBL2 into the TTT-RUVBL complex which leads to the dimerization of the mTORC1 complex and its subsequent activation. Interacts with UBQLN1. Interacts with TTI1 and TELO2. Interacts with CLIP1; phosphorylates and regulates CLIP1. Interacts with NBN. Interacts with HTR6. Interacts with BRAT1. Interacts with MEAK7 (via C-terminal domain); the interaction increases upon nutrient stimulation. Interacts with TM4SF5; the interaction is positively regulated by arginine and is negatively regulated by leucine. Interacts with GPR137B. Interacts with NCKAP1L. Interacts with TPCN1 and TPCN2; the interaction is required for TPCN1 and TPCN2 sensitivity to ATP. Interacts with ATP6V1A and with CRYAB, forming a ternary complex. Interacts with SLC38A7; this interaction mediates the recruitment of mTORC1 to the lysosome and its subsequent activation. Interacts with TSPAN8. Autophosphorylates when part of mTORC1 or mTORC2. Phosphorylation at Ser-1261, Ser-2159 and Thr-2164 promotes autophosphorylation. Phosphorylated at Ser-2448 by RPS6KB1. Phosphorylation in the kinase domain modulates the interactions of MTOR with RPTOR and AKT1S1/PRAS40 and leads to increased intrinsic mTORC1 kinase activity. Phosphorylation at Ser-2159 by TBK1 in response to growth factors and pathogen recognition receptors promotes mTORC1 activity. Phosphorylation at Ser-2159 by TBK1 in response to EGF growth factor promotes mTORC2 activity, leading to AKT1 phosphorylation and activation. Phosphorylation at Thr-2173 in the ATP-binding region by AKT1 strongly reduces kinase activity. Post-translationally, ubiquitinated at Lys-2066 by the SCF(FBXO22) complex via 'Lys-27'-linked ubiquitination prevents mTORC1 substrate recruitment.

The protein localises to the lysosome membrane. It is found in the endoplasmic reticulum membrane. Its subcellular location is the golgi apparatus membrane. It localises to the cell membrane. The protein resides in the mitochondrion outer membrane. The protein localises to the cytoplasm. It is found in the nucleus. Its subcellular location is the PML body. It localises to the microsome membrane. The protein resides in the cytoplasmic vesicle. The protein localises to the phagosome. It catalyses the reaction L-seryl-[protein] + ATP = O-phospho-L-seryl-[protein] + ADP + H(+). The enzyme catalyses L-threonyl-[protein] + ATP = O-phospho-L-threonyl-[protein] + ADP + H(+). It carries out the reaction L-tyrosyl-[protein] + ATP = O-phospho-L-tyrosyl-[protein] + ADP + H(+). Its activity is regulated as follows. The mTORC1 complex is activated in response to nutrients, growth factors or amino acids: activation requires relocalization of the mTORC1 complex to lysosomes that is mediated by the Ragulator complex, SLC38A9, and the Rag GTPases RagA/RRAGA, RagB/RRAGB, RagC/RRAGC and RagD/RRAGD. Activation of mTORC1 by growth factors such as insulin involves AKT1-mediated phosphorylation of TSC1-TSC2, which leads to the activation of the RHEB GTPase a potent activator of the protein kinase activity of mTORC1. Insulin-stimulated and amino acid-dependent phosphorylation at Ser-1261 promotes autophosphorylation and the activation of mTORC1. On the other hand, low cellular energy levels can inhibit mTORC1 through activation of PRKAA1 while hypoxia inhibits mTORC1 through a REDD1-dependent mechanism which may also require PRKAA1. The kinase activity of MTOR within the mTORC1 complex is positively regulated by MLST8. The kinase activity of MTOR is inhibited by DEPTOR and AKT1S1. The non-canonical mTORC1 complex is independent of the RHEB GTPase and specifically mediates phosphorylation of MiT/TFE factors TFEB and TFE3 but not other mTORC1 substrates: it is activated by FLCN, which activates Rag GTPases RagC/RRAGC and RagD/RRAGD. MTOR is the target of the immunosuppressive and anti-cancer drug rapamycin which acts in complex with FKBP1A/FKBP12, and specifically inhibits its kinase activity. mTORC2 is also activated by growth factors, but seems to be nutrient-insensitive. mTORC2 associates and is directly activated by ribosomes. mTORC2 may also be regulated by RHEB but in an indirect manner through the PI3K signaling pathway. Its function is as follows. Serine/threonine protein kinase which is a central regulator of cellular metabolism, growth and survival in response to hormones, growth factors, nutrients, energy and stress signals. MTOR directly or indirectly regulates the phosphorylation of at least 800 proteins. Functions as part of 2 structurally and functionally distinct signaling complexes mTORC1 and mTORC2 (mTOR complex 1 and 2). In response to nutrients, growth factors or amino acids, mTORC1 is recruited to the lysosome membrane and promotes protein, lipid and nucleotide synthesis by phosphorylating key regulators of mRNA translation and ribosome synthesis. This includes phosphorylation of EIF4EBP1 and release of its inhibition toward the elongation initiation factor 4E (eiF4E). Moreover, phosphorylates and activates RPS6KB1 and RPS6KB2 that promote protein synthesis by modulating the activity of their downstream targets including ribosomal protein S6, eukaryotic translation initiation factor EIF4B, and the inhibitor of translation initiation PDCD4. Stimulates the pyrimidine biosynthesis pathway, both by acute regulation through RPS6KB1-mediated phosphorylation of the biosynthetic enzyme CAD, and delayed regulation, through transcriptional enhancement of the pentose phosphate pathway which produces 5-phosphoribosyl-1-pyrophosphate (PRPP), an allosteric activator of CAD at a later step in synthesis, this function is dependent on the mTORC1 complex. Regulates ribosome synthesis by activating RNA polymerase III-dependent transcription through phosphorylation and inhibition of MAF1 an RNA polymerase III-repressor. Activates dormant ribosomes by mediating phosphorylation of SERBP1, leading to SERBP1 inactivation and reactivation of translation. In parallel to protein synthesis, also regulates lipid synthesis through SREBF1/SREBP1 and LPIN1. To maintain energy homeostasis mTORC1 may also regulate mitochondrial biogenesis through regulation of PPARGC1A. In the same time, mTORC1 inhibits catabolic pathways: negatively regulates autophagy through phosphorylation of ULK1. Under nutrient sufficiency, phosphorylates ULK1 at 'Ser-758', disrupting the interaction with AMPK and preventing activation of ULK1. Also prevents autophagy through phosphorylation of the autophagy inhibitor DAP. Also prevents autophagy by phosphorylating RUBCNL/Pacer under nutrient-rich conditions. Prevents autophagy by mediating phosphorylation of AMBRA1, thereby inhibiting AMBRA1 ability to mediate ubiquitination of ULK1 and interaction between AMBRA1 and PPP2CA. mTORC1 exerts a feedback control on upstream growth factor signaling that includes phosphorylation and activation of GRB10 a INSR-dependent signaling suppressor. Among other potential targets mTORC1 may phosphorylate CLIP1 and regulate microtubules. The mTORC1 complex is inhibited in response to starvation and amino acid depletion. The non-canonical mTORC1 complex, which acts independently of RHEB, specifically mediates phosphorylation of MiT/TFE factors TFEB and TFE3 in the presence of nutrients, promoting their cytosolic retention and inactivation. Upon starvation or lysosomal stress, inhibition of mTORC1 induces dephosphorylation and nuclear translocation of TFEB and TFE3, promoting their transcription factor activity. The mTORC1 complex regulates pyroptosis in macrophages by promoting GSDMD oligomerization. MTOR phosphorylates RPTOR which in turn inhibits mTORC1. As part of the mTORC2 complex, MTOR transduces signals from growth factors to pathways involved in proliferation, cytoskeletal organization, lipogenesis and anabolic output. In response to growth factors, mTORC2 phosphorylates and activates AGC protein kinase family members, including AKT (AKT1, AKT2 and AKT3), PKC (PRKCA, PRKCB and PRKCE) and SGK1. In contrast to mTORC1, mTORC2 is nutrient-insensitive. mTORC2 plays a critical role in AKT1 activation by mediating phosphorylation of different sites depending on the context, such as 'Thr-450', 'Ser-473', 'Ser-477' or 'Thr-479', facilitating the phosphorylation of the activation loop of AKT1 on 'Thr-308' by PDPK1/PDK1 which is a prerequisite for full activation. mTORC2 also regulates the phosphorylation of SGK1 at 'Ser-422'. mTORC2 may regulate the actin cytoskeleton, through phosphorylation of PRKCA, PXN and activation of the Rho-type guanine nucleotide exchange factors RHOA and RAC1A or RAC1B. The mTORC2 complex also phosphorylates various proteins involved in insulin signaling, such as FBXW8 and IGF2BP1. May also regulate insulin signaling by acting as a tyrosine protein kinase that catalyzes phosphorylation of IGF1R and INSR. Regulates osteoclastogenesis by adjusting the expression of CEBPB isoforms. Plays an important regulatory role in the circadian clock function; regulates period length and rhythm amplitude of the suprachiasmatic nucleus (SCN) and liver clocks. This is Serine/threonine-protein kinase mTOR from Mus musculus (Mouse).